Consider the following 727-residue polypeptide: Tubulin polyglutamylase TTLL11 (727 aa).

Residues 1 to 12 (MRRSSPEKKPEA) show a composition bias toward basic and acidic residues. The interval 1–88 (MRRSSPEKKP…ARVVRRLPPA (88 aa)) is disordered. Residues 17–34 (DAAAAAAATAAATESLPA) show a composition bias toward low complexity. 2 stretches are compositionally biased toward basic and acidic residues: residues 49–63 (DPERLELEEQPKDVG) and 72–81 (HAPEEGEARV). The 353-residue stretch at 125 to 477 (PVTVDSSKAR…EVKVAVIRDT (353 aa)) folds into the TTL domain. ATP contacts are provided by residues lysine 246, 252-253 (QG), 279-282 (QEYI), and 292-294 (KFD). Position 252 (glutamine 252) interacts with a protein. Position 318 (arginine 318) interacts with L-glutamate. Residue 340 to 341 (TN) participates in ATP binding. 3 residues coordinate L-glutamate: tyrosine 342, serine 343, and lysine 362. Residues aspartate 425, glutamate 438, and asparagine 440 each coordinate Mg(2+). The c-MTBD region stretch occupies residues 464–566 (LVDEEVKVAV…SICLKQVFPK (103 aa)). Residue lysine 470 coordinates L-glutamate. Disordered regions lie at residues 530 to 551 (KSFTSKEDLNCDPTGGDSEPNP) and 694 to 727 (RPLQRNPPQMNRPEHSATGSSAPRVIGASKLSQS).

Belongs to the tubulin--tyrosine ligase family. Mg(2+) is required as a cofactor. As to expression, highly expressed in brain, kidney, liver, lung, muscle and testis. Expressed in heart, spleen and trachea. In the brain, expressed in ependymal cilia, cortex, corpus callosum and striatum.

Its subcellular location is the cytoplasm. The protein localises to the cytoskeleton. It localises to the cilium basal body. It carries out the reaction L-glutamyl-[protein] + L-glutamate + ATP = gamma-L-glutamyl-L-glutamyl-[protein] + ADP + phosphate + H(+). The enzyme catalyses (L-glutamyl)(n)-gamma-L-glutamyl-L-glutamyl-[protein] + L-glutamate + ATP = (L-glutamyl)(n+1)-gamma-L-glutamyl-L-glutamyl-[protein] + ADP + phosphate + H(+). Polyglutamylase which modifies tubulin, generating polyglutamate side chains of variable lengths on the gamma-carboxyl group of specific glutamate residues within the C-terminal tail of tubulin. Preferentially mediates ATP-dependent polyglutamate long side-chain elongation over the initiation step of the polyglutamylation reaction. Preferentially modifies the alpha-tubulin tail over a beta-tail. Required for CCSAP localization to both spindle and cilia microtubules. Promotes tubulin polyglutamylation which stimulates spastin/SPAST-mediated microtubule severing, thereby regulating microtubule functions. This is Tubulin polyglutamylase TTLL11 from Mus musculus (Mouse).